Reading from the N-terminus, the 77-residue chain is Liver-expressed antimicrobial peptide 2 (77 aa).

A signal peptide spans 1–22 (MWHLKLCAVLMIFLLLLGQIDG). Positions 23-37 (SPIPEVSSAKRRPRR) are excised as a propeptide. Disulfide bonds link Cys54–Cys65 and Cys60–Cys70.

Belongs to the LEAP2 family.

It localises to the secreted. In terms of biological role, has an antimicrobial activity. In Homo sapiens (Human), this protein is Liver-expressed antimicrobial peptide 2 (LEAP2).